The primary structure comprises 156 residues: Egg-lysin (156 aa).

A signal peptide spans 1 to 18 (MKLLVLCVFAMMATLAVS).

Monomer. Homodimer. Molecules associate into dimers and then rapidly dissociate again. Interacts (as a monomer) with the egg vitelline layer protein VERL (via VERL repeats); each VERL chain can bind multiple copies of lysin. Sperm.

Its subcellular location is the cytoplasmic vesicle. It localises to the secretory vesicle. It is found in the acrosome lumen. Its function is as follows. Creates a 3 um hole in the egg vitelline layer through which the sperm passes. Does not have enzyme activity. Species-specific interaction between the sperm protein lysin and the egg protein VERL exposes a basic surface on lysin that may dissociate the egg vitelline layer via electrostatic repulsion. Plays a role in ensuring species-specific fertilization. This chain is Egg-lysin, found in Haliotis cracherodii (Black abalone).